Reading from the N-terminus, the 337-residue chain is Biotin synthase (337 aa).

The Radical SAM core domain maps to 39-267 (QEVQVCTLLS…KAMVRLSAGR (229 aa)). [4Fe-4S] cluster is bound by residues Cys54, Cys58, and Cys61. [2Fe-2S] cluster is bound by residues Cys98, Cys130, Cys190, and Arg262.

Belongs to the radical SAM superfamily. Biotin synthase family. In terms of assembly, homodimer. [4Fe-4S] cluster is required as a cofactor. [2Fe-2S] cluster serves as cofactor.

It catalyses the reaction (4R,5S)-dethiobiotin + (sulfur carrier)-SH + 2 reduced [2Fe-2S]-[ferredoxin] + 2 S-adenosyl-L-methionine = (sulfur carrier)-H + biotin + 2 5'-deoxyadenosine + 2 L-methionine + 2 oxidized [2Fe-2S]-[ferredoxin]. It functions in the pathway cofactor biosynthesis; biotin biosynthesis; biotin from 7,8-diaminononanoate: step 2/2. Catalyzes the conversion of dethiobiotin (DTB) to biotin by the insertion of a sulfur atom into dethiobiotin via a radical-based mechanism. In Cytophaga hutchinsonii (strain ATCC 33406 / DSM 1761 / CIP 103989 / NBRC 15051 / NCIMB 9469 / D465), this protein is Biotin synthase.